Reading from the N-terminus, the 355-residue chain is Adenine deaminase (355 aa).

3 residues coordinate Zn(2+): His23, His25, and His211. The active-site Proton donor is the Glu214. Asp292 is a binding site for Zn(2+). Asp293 serves as a coordination point for substrate.

This sequence belongs to the metallo-dependent hydrolases superfamily. Adenosine and AMP deaminases family. Adenine deaminase type 2 subfamily. Zn(2+) is required as a cofactor.

The protein resides in the cytoplasm. The protein localises to the nucleus. The catalysed reaction is adenine + H2O + H(+) = hypoxanthine + NH4(+). In terms of biological role, catalyzes the hydrolytic deamination of adenine to hypoxanthine. Plays an important role in the purine salvage pathway and in nitrogen catabolism. In Kluyveromyces lactis (strain ATCC 8585 / CBS 2359 / DSM 70799 / NBRC 1267 / NRRL Y-1140 / WM37) (Yeast), this protein is Adenine deaminase.